Consider the following 223-residue polypeptide: Putative 3-methyladenine DNA glycosylase (223 aa).

This sequence belongs to the DNA glycosylase MPG family.

This chain is Putative 3-methyladenine DNA glycosylase, found in Pseudomonas syringae pv. tomato (strain ATCC BAA-871 / DC3000).